A 357-amino-acid chain; its full sequence is UDP-N-acetylglucosamine--N-acetylmuramyl-(pentapeptide) pyrophosphoryl-undecaprenol N-acetylglucosamine transferase (357 aa).

Residues 12-14 (TGG), Asn-124, Arg-163, Ser-189, Ile-243, 262-267 (ALTVSE), and Gln-288 each bind UDP-N-acetyl-alpha-D-glucosamine.

It belongs to the glycosyltransferase 28 family. MurG subfamily.

Its subcellular location is the cell inner membrane. The catalysed reaction is di-trans,octa-cis-undecaprenyl diphospho-N-acetyl-alpha-D-muramoyl-L-alanyl-D-glutamyl-meso-2,6-diaminopimeloyl-D-alanyl-D-alanine + UDP-N-acetyl-alpha-D-glucosamine = di-trans,octa-cis-undecaprenyl diphospho-[N-acetyl-alpha-D-glucosaminyl-(1-&gt;4)]-N-acetyl-alpha-D-muramoyl-L-alanyl-D-glutamyl-meso-2,6-diaminopimeloyl-D-alanyl-D-alanine + UDP + H(+). The protein operates within cell wall biogenesis; peptidoglycan biosynthesis. Cell wall formation. Catalyzes the transfer of a GlcNAc subunit on undecaprenyl-pyrophosphoryl-MurNAc-pentapeptide (lipid intermediate I) to form undecaprenyl-pyrophosphoryl-MurNAc-(pentapeptide)GlcNAc (lipid intermediate II). The protein is UDP-N-acetylglucosamine--N-acetylmuramyl-(pentapeptide) pyrophosphoryl-undecaprenol N-acetylglucosamine transferase of Pseudomonas paraeruginosa (strain DSM 24068 / PA7) (Pseudomonas aeruginosa (strain PA7)).